Consider the following 62-residue polypeptide: Large ribosomal subunit protein uL30 (62 aa).

It belongs to the universal ribosomal protein uL30 family. As to quaternary structure, part of the 50S ribosomal subunit.

This Halalkalibacterium halodurans (strain ATCC BAA-125 / DSM 18197 / FERM 7344 / JCM 9153 / C-125) (Bacillus halodurans) protein is Large ribosomal subunit protein uL30.